The chain runs to 93 residues: Protein BOLA2 (93 aa).

The residue at position 29 (Cys29) is an S-glutathionyl cysteine; transient; alternate. The segment at 72-93 (KAQTPQQWKPPSQDSATLTKDA) is disordered.

It belongs to the bolA/yrbA family. Homodimer. Interacts in vitro with GRXS14, GRXS15, GRXS16 and GRXS17, but not with GRXC5. Interacts in vivo only with GRXS17. Can be either glutathionylated or forming covalent homodimers, depending on the oxidation state.

It localises to the cytoplasm. The protein localises to the nucleus. Its function is as follows. May act either alone or in interaction with glutaredoxin as a redox-regulated transcriptional regulator, or as a factor regulating Fe-S cluster biogenesis. The GRXS17-BOLA2 heterodimer binds a labile, oxygen sensitive iron-sulfur cluster. The chain is Protein BOLA2 from Arabidopsis thaliana (Mouse-ear cress).